Reading from the N-terminus, the 432-residue chain is Glutamyl-tRNA reductase (432 aa).

Residues 49–52, S107, 112–114, and Q118 contribute to the substrate site; these read TCNR and ETQ. Residue C50 is the Nucleophile of the active site. An NADP(+)-binding site is contributed by 186 to 191; the sequence is GAGEMG.

The protein belongs to the glutamyl-tRNA reductase family. In terms of assembly, homodimer.

The enzyme catalyses (S)-4-amino-5-oxopentanoate + tRNA(Glu) + NADP(+) = L-glutamyl-tRNA(Glu) + NADPH + H(+). It participates in porphyrin-containing compound metabolism; protoporphyrin-IX biosynthesis; 5-aminolevulinate from L-glutamyl-tRNA(Glu): step 1/2. Catalyzes the NADPH-dependent reduction of glutamyl-tRNA(Glu) to glutamate 1-semialdehyde (GSA). This chain is Glutamyl-tRNA reductase, found in Campylobacter jejuni subsp. jejuni serotype O:2 (strain ATCC 700819 / NCTC 11168).